A 124-amino-acid polypeptide reads, in one-letter code: Protein YobA (124 aa).

Residues 1–26 (MASTARSLRYALAILTTSLVTPSVWA) form the signal peptide. Cu cation contacts are provided by His-27 and His-113.

It belongs to the CopC family.

The protein resides in the periplasm. The sequence is that of Protein YobA (yobA) from Escherichia coli O6:H1 (strain CFT073 / ATCC 700928 / UPEC).